The sequence spans 129 residues: N16.5 matrix protein (129 aa).

The signal sequence occupies residues 1–23; the sequence is MTCTLRWTITALVLLGICHLARP. Repeat copies occupy residues 91–92, 93–94, 95–96, 97–98, and 99–100. The tract at residues 91 to 100 is 5 X 2 AA tandem repeats of N-G; that stretch reads NGNGNGNGNG.

Belongs to the N16 matrix protein family. In terms of assembly, heterooligomer; disulfide-linked. Pif97, Pif80, N16 and other proteins form a complex. In terms of tissue distribution, component of conchiolin, the organic matrix of nacre. Specifically expressed in mantle epithelium.

The protein resides in the secreted. It localises to the extracellular space. It is found in the extracellular matrix. May be specifically involved in the formation of the nacreous layer. In Pinctada fucata (Akoya pearl oyster), this protein is N16.5 matrix protein.